Consider the following 327-residue polypeptide: GTP 3',8-cyclase (327 aa).

In terms of domain architecture, Radical SAM core spans 8-232; that stretch reads AFARKFYYLR…LQRSRSDGPA (225 aa). Arg17 serves as a coordination point for GTP. Positions 24 and 28 each coordinate [4Fe-4S] cluster. Tyr30 contributes to the S-adenosyl-L-methionine binding site. Cys31 contributes to the [4Fe-4S] cluster binding site. Arg66 contributes to the GTP binding site. Gly70 serves as a coordination point for S-adenosyl-L-methionine. Thr97 provides a ligand contact to GTP. Residue Ser121 participates in S-adenosyl-L-methionine binding. Lys158 lines the GTP pocket. Met192 is an S-adenosyl-L-methionine binding site. 2 residues coordinate [4Fe-4S] cluster: Cys255 and Cys258. Residue 260–262 participates in GTP binding; it reads RLR. Cys272 is a [4Fe-4S] cluster binding site.

The protein belongs to the radical SAM superfamily. MoaA family. In terms of assembly, monomer and homodimer. The cofactor is [4Fe-4S] cluster.

It carries out the reaction GTP + AH2 + S-adenosyl-L-methionine = (8S)-3',8-cyclo-7,8-dihydroguanosine 5'-triphosphate + 5'-deoxyadenosine + L-methionine + A + H(+). It functions in the pathway cofactor biosynthesis; molybdopterin biosynthesis. Catalyzes the cyclization of GTP to (8S)-3',8-cyclo-7,8-dihydroguanosine 5'-triphosphate. The polypeptide is GTP 3',8-cyclase (Photorhabdus laumondii subsp. laumondii (strain DSM 15139 / CIP 105565 / TT01) (Photorhabdus luminescens subsp. laumondii)).